A 439-amino-acid polypeptide reads, in one-letter code: Cysteine desulfurase-like protein ustD (439 aa).

A disordered region spans residues 1–25 (MKSVATSSLDDVDKDSVPLGSSING). Pyridoxal 5'-phosphate is bound by residues 120–121 (TT), N206, and 255–257 (SWY). K258 carries the N6-(pyridoxal phosphate)lysine modification.

Belongs to the class-V pyridoxal-phosphate-dependent aminotransferase family. Requires pyridoxal 5'-phosphate as cofactor.

It functions in the pathway mycotoxin biosynthesis. Functionally, cysteine desulfurase-like protein; part of the gene cluster that mediates the biosynthesis of the secondary metabolite ustiloxin B, an antimitotic tetrapeptide. First, ustA is processed by the subtilisin-like endoprotease Kex2 that is outside the ustiloxin B gene cluster, at the C-terminal side of Arg-Lys, after transfer to Golgi apparatus through the endoplasmic reticulum (ER). Cleavage by KEX2 generates 16 peptides YAIG-I to YAIG-XVI. To process the precursor peptide further, at least two peptidases are necessary to cleave the N-terminal and C-terminal sides of the Tyr-Ala-Ile-Gly core peptide which serves as backbone for the synthesis of ustiloxin B, through cyclization and modification of the tyrosine with a non-protein coding amino acid, norvaline. One of the two peptidases must be the serine peptidase ustP; and the other pepdidase is probably ustH. Macrocyclization of the core peptide derived from ustA requires the tyrosinase ustQ, as well as the homologous oxidases ustYa and ustYb, and leads to the production of the first cyclization product N-desmethylustiloxin F. For the formation of N-desmethylustiloxin F, three oxidation steps are required, hydroxylation at the benzylic position, hydroxylation at either the aromatic ring of Tyr or beta-position of Ile, and oxidative cyclization. UstQ may catalyze the oxidation of a phenol moiety, whereas the ustYa and ustYb are most likely responsible for the remaining two-step oxidations. N-desmethylustiloxin F is then methylated by ustM to yield ustiloxin F which in turn substrate of the cytochrome P450 monooxygenase ustC which catalyzes the formation of S-deoxyustiloxin H. The flavoprotein monooxygenases ustF1 and ustF2 then participate in the modification of the side chain of S-deoxyustiloxin H, leading to the synthesis of an oxime intermediate, via ustiloxin H. Finally, carboxylative dehydration performed by the cysteine desulfurase-like protein ustD yields ustiloxin B. The chain is Cysteine desulfurase-like protein ustD from Aspergillus flavus (strain ATCC 200026 / FGSC A1120 / IAM 13836 / NRRL 3357 / JCM 12722 / SRRC 167).